The following is a 300-amino-acid chain: Ribosomal protein L11 methyltransferase (300 aa).

S-adenosyl-L-methionine is bound by residues threonine 152, glycine 173, aspartate 195, and asparagine 234.

It belongs to the methyltransferase superfamily. PrmA family.

It is found in the cytoplasm. It carries out the reaction L-lysyl-[protein] + 3 S-adenosyl-L-methionine = N(6),N(6),N(6)-trimethyl-L-lysyl-[protein] + 3 S-adenosyl-L-homocysteine + 3 H(+). In terms of biological role, methylates ribosomal protein L11. This Paraburkholderia phytofirmans (strain DSM 17436 / LMG 22146 / PsJN) (Burkholderia phytofirmans) protein is Ribosomal protein L11 methyltransferase.